A 435-amino-acid chain; its full sequence is MKKKIVAIIGRPNVGKSSLFNRIIKEKKSIVDNKPGVTRDRIYSNAEWLTREFILVDTGGISIDQQLFSNEIQIQTQIAIEQADVIIFVVDFLNRLDKDDKMIAKILHKSKKPVILAINKYDKKTIDDHNYEFMNLGFSDLYFISSTHGIGIGDLLDKVISYISKNDVDLKDDSTKIAIIGRPNVGKSSLVNSLVNENRMIVSEIEGTTLDAVDISFSYNKNKYTVIDTAGIRKKSKLGQTVEKYSYLRSLSAITNSDIVLLMIDATKPITDQDTNIGGLIYDEKKPVIIVVNKWDLVKNKQEQILKKEEEIRAYFKYISYAKIIFISALDKTRVTKILDLVADIKQSLSVKVKTYVLNEVLNKAQLINPAPEFNGNRLKIYYASQVQAYIPTFVLFCNHPNYLHFSYKRFLENQIRFSFGFDSIPINLIFRERK.

2 consecutive EngA-type G domains span residues 4–167 (KIVA…SKND) and 175–350 (TKIA…QSLS). GTP contacts are provided by residues 10-17 (GRPNVGKS), 57-61 (DTGGI), 119-122 (NKYD), 181-188 (GRPNVGKS), 228-232 (DTAGI), and 293-296 (NKWD). The KH-like domain maps to 351 to 435 (VKVKTYVLNE…PINLIFRERK (85 aa)).

The protein belongs to the TRAFAC class TrmE-Era-EngA-EngB-Septin-like GTPase superfamily. EngA (Der) GTPase family. In terms of assembly, associates with the 50S ribosomal subunit.

Its function is as follows. GTPase that plays an essential role in the late steps of ribosome biogenesis. The polypeptide is GTPase Der (Mycoplasma mycoides subsp. mycoides SC (strain CCUG 32753 / NCTC 10114 / PG1)).